The primary structure comprises 151 residues: Endoribonuclease YbeY (151 aa).

Zn(2+) is bound by residues His-117, His-121, and His-127.

Belongs to the endoribonuclease YbeY family. It depends on Zn(2+) as a cofactor.

The protein resides in the cytoplasm. Functionally, single strand-specific metallo-endoribonuclease involved in late-stage 70S ribosome quality control and in maturation of the 3' terminus of the 16S rRNA. The protein is Endoribonuclease YbeY of Alkaliphilus oremlandii (strain OhILAs) (Clostridium oremlandii (strain OhILAs)).